A 472-amino-acid chain; its full sequence is 2-methylcitrate synthase, mitochondrial (472 aa).

Residues 1–29 (MALNLTSSRRALGSLKPLTRAAFSGVRGY) constitute a mitochondrion transit peptide. CoA is bound by residues arginine 75 and lysine 193. Histidine 271 is an oxaloacetate binding site. Leucine 306 is a CoA binding site. Histidine 307 is an active-site residue. Positions 348, 350, and 351 each coordinate CoA. Oxaloacetate is bound by residues histidine 353 and arginine 362. Residue histidine 353 is part of the active site. Residues threonine 402, lysine 403, and asparagine 408 each coordinate CoA. Residue aspartate 410 is part of the active site. Oxaloacetate contacts are provided by arginine 436 and arginine 456.

This sequence belongs to the citrate synthase family. In terms of assembly, homodimer.

Its subcellular location is the mitochondrion matrix. It carries out the reaction propanoyl-CoA + oxaloacetate + H2O = (2S,3S)-2-methylcitrate + CoA + H(+). The catalysed reaction is oxaloacetate + acetyl-CoA + H2O = citrate + CoA + H(+). It functions in the pathway organic acid metabolism; propanoate degradation. Component of the methylcitrate cycle that catalyzes the synthesis of (2S,3S)-2-methylcitrate from propionyl-CoA and oxaloacetate. Plays an important role in detoxification of propionyl-CoA, an inhibitor of both primary and secondary metabolism. Also has citrate synthase activity using as substrates acetyl-CoA and oxaloacetate. The polypeptide is 2-methylcitrate synthase, mitochondrial (Gibberella moniliformis (Maize ear and stalk rot fungus)).